A 1010-amino-acid chain; its full sequence is Sodium/potassium-transporting ATPase subunit alpha-3 (1010 aa).

Residues 1 to 21 (MGDKDDRFPKKKKGGTKDMDA) are disordered. The Cytoplasmic portion of the chain corresponds to 1-74 (MGDKDDRFPK…NALTPPPTTP (74 aa)). The interval 69–71 (PPP) is interaction with phosphoinositide-3 kinase. A helical transmembrane segment spans residues 75–95 (EWVKFCRQLFGGFSILLWTGA). Residues 96–118 (ILCFLAYAIQAATEDEPAGDNLY) are Extracellular-facing. Residues 119–139 (LGIVLTAVVVITGCFSYFQEA) traverse the membrane as a helical segment. Residues 140–275 (KSSKIMESFK…TGKTPIAVEI (136 aa)) lie on the Cytoplasmic side of the membrane. Residues 201-216 (DNSSLTGESEPQSRSP) show a composition bias toward polar residues. The segment at 201–221 (DNSSLTGESEPQSRSPDCTHD) is disordered. A helical membrane pass occupies residues 276-295 (EHFIHIITGVAVFLGVTFFI). Residues 296–307 (LAIILGYTWLKA) lie on the Extracellular side of the membrane. The chain crosses the membrane as a helical span at residues 308–325 (VIFLIGIIVANVPEGLLA). The Cytoplasmic segment spans residues 326–759 (TVTVCLTLTA…EEGRLIFDNL (434 aa)). Asp-363 (4-aspartylphosphate intermediate) is an active-site residue. Mg(2+) contacts are provided by Asp-704 and Asp-708. The chain crosses the membrane as a helical span at residues 760–779 (KKSIAYTLTSNIPEITPFLF). At 780 to 789 (FIIVNIPLAL) the chain is on the extracellular side. A helical transmembrane segment spans residues 790 to 810 (GTITILCIDLGTDMGSAISLA). Topologically, residues 811–830 (YETAESDIMKRQPRNPCRDK) are cytoplasmic. Residues 831-853 (LVNERLISIAYGQIGMIQALGGF) traverse the membrane as a helical segment. The Extracellular portion of the chain corresponds to 854 to 905 (FSYFVILAENGFLPSQLVGIRLNWDDRSLNDLEDSYGQQWTYEQRKIVEFTC). Residues 906–925 (HTAFFVSIVVVQWADLIICK) form a helical membrane-spanning segment. Residues 926–938 (TRRNSVFQQGMKN) are Cytoplasmic-facing. Ser-930 is subject to Phosphoserine; by PKA. A helical membrane pass occupies residues 939-957 (KILIFGLFEETALAAFLSY). Residues 958–972 (CPGMDVALRMYPLKP) lie on the Extracellular side of the membrane. Residues 973-993 (TWWFWAFPYSFLIFVYDEARK) traverse the membrane as a helical segment. Over 994–1010 (LILCRNPGGWVEKETYY) the chain is Cytoplasmic.

It belongs to the cation transport ATPase (P-type) (TC 3.A.3) family. Type IIC subfamily. In terms of assembly, the sodium/potassium-transporting ATPase is composed of a catalytic alpha subunit, an auxiliary non-catalytic beta subunit and an additional regulatory subunit.

The protein resides in the cell membrane. The catalysed reaction is K(+)(out) + Na(+)(in) + ATP + H2O = K(+)(in) + Na(+)(out) + ADP + phosphate + H(+). In terms of biological role, this is the catalytic component of the active enzyme, which catalyzes the hydrolysis of ATP coupled with the exchange of sodium and potassium ions across the plasma membrane. This action creates the electrochemical gradient of sodium and potassium ions, providing the energy for active transport of various nutrients. This chain is Sodium/potassium-transporting ATPase subunit alpha-3 (atp1a3), found in Oreochromis mossambicus (Mozambique tilapia).